The sequence spans 400 residues: uncharacterized protein (400 aa).

The protein belongs to the mimivirus R640 family.

Its subcellular location is the virion. This is an uncharacterized protein from Acanthamoeba polyphaga (Amoeba).